The following is a 418-amino-acid chain: Pestheic acid cluster transcriptional regulator 1 (418 aa).

Residues 244 to 272 form a disordered region; it reads GTAVTTTATTSSSFISKSSEEPSPKRIKP. Positions 245–260 are enriched in low complexity; that stretch reads TAVTTTATTSSSFISK.

The protein resides in the nucleus. In terms of biological role, transcription factor that, with ptaR2 and ptaR3, coregulates the expression of the gene cluster that mediates the biosynthesis of pestheic acid, a diphenyl ether which is a biosynthetic precursor of the unique chloropupukeananes. In Pestalotiopsis fici (strain W106-1 / CGMCC3.15140), this protein is Pestheic acid cluster transcriptional regulator 1.